A 581-amino-acid polypeptide reads, in one-letter code: Coiled-coil domain-containing protein 102A (581 aa).

4 disordered regions span residues 1–61, 156–219, 496–517, and 534–581; these read MNHT…GLGC, QRVR…IGTD, QAED…SLDE, and SRLR…LQIP. Positions 39–59 are enriched in low complexity; that stretch reads TPSPSGGTPSSSPPLLLSPGL. A coiled-coil region spans residues 70 to 164; sequence REELRLRELE…AQRVRAEQSS (95 aa). Residues 161–184 show a composition bias toward polar residues; that stretch reads EQSSPENASTAPESISSTASTHSN. Basic and acidic residues predominate over residues 185-202; the sequence is QPREAEIKQDNQDEEGVR. Residues 270–541 are a coiled coil; that stretch reads AALEEDTSKL…LQSRLRRQQN (272 aa). The segment covering 559-581 has biased composition (acidic residues); that stretch reads EDADGPPSDPDEDEEEELQLQIP.

This chain is Coiled-coil domain-containing protein 102A (ccdc102a), found in Danio rerio (Zebrafish).